The following is a 212-amino-acid chain: Putative aryl-alcohol dehydrogenase AAD6 (212 aa).

Residue Y76 is the Proton donor of the active site.

Belongs to the aldo/keto reductase family. Aldo/keto reductase 2 subfamily.

The polypeptide is Putative aryl-alcohol dehydrogenase AAD6 (Saccharomyces cerevisiae (strain ATCC 204508 / S288c) (Baker's yeast)).